The sequence spans 517 residues: Tyrosine-protein kinase Src42A (517 aa).

A disordered region spans residues 1–47 (MGNCLTTQKGEPDKPADRIKLDDPPTIGVGVGVPQIPMPSHAGQPPE). Over residues 10–23 (GEPDKPADRIKLDD) the composition is skewed to basic and acidic residues. One can recognise an SH3 domain in the interval 63 to 124 (ANAKIFVALY…PSNYVAKLKS (62 aa)). An SH2 domain is found at 130–222 (WYFRKIKRIE…GLCVNLCKPC (93 aa)). One can recognise a Protein kinase domain in the interval 248-504 (LKFVRKLGSG…TLQWKLEDFY (257 aa)). Residues 254-262 (LGSGQFGDV) and Lys-276 contribute to the ATP site. Asp-370 functions as the Proton acceptor in the catalytic mechanism.

It belongs to the protein kinase superfamily. Tyr protein kinase family. SRC subfamily. In terms of tissue distribution, ubiquitous in early embryos, in stages 13-16 expression is seen in visceral mesoderm, hindgut, brain, anal pads and ventral ganglions. In larvae, expression is in CNS, wing disk, leg disk and photoreceptor precursors in the eye-antenna disks posterior to the morphogenetic furrow.

It catalyses the reaction L-tyrosyl-[protein] + ATP = O-phospho-L-tyrosyl-[protein] + ADP + H(+). In terms of biological role, required directly or indirectly for the phosphorylation of drpr which is necessary for the interaction of drpr with shark and subsequent glial phagocytic activity. Together with drpr and shark, promotes the migration of macrophages to sites of wounding as part of a signaling cascade where Src42A detects production of hydrogen peroxide at wound sites which triggers phosphorylation of drpr and subsequent recruitment and activation of shark. Essential for correct eye morphogenesis (ommatidial R7 neuron formation) which requires the Ras1/MAPK signal transduction pathway. May be involved in the regulation of cytoskeleton organization and cell-cell contacts in developing ommatidia. Involved in phosphorylation of Dscam1, a cell surface receptor involved in targeting of growing axons during eye morphogenesis, and its interaction partner the SH2/SH3 adapter protein dock/dreadlocks. During embryogenesis, involved in regulation of dorsal closure where it may have a role in activating the JNK pathway in leading edge cells during this process. The protein is Tyrosine-protein kinase Src42A of Drosophila melanogaster (Fruit fly).